We begin with the raw amino-acid sequence, 915 residues long: Kinesin-like protein KIN-10A (915 aa).

Pro residues predominate over residues 1 to 16; it reads MAPPTPSPRPGPPPTP. 2 disordered regions span residues 1–28 and 34–53; these read MAPPTPSPRPGPPPTPQAAMTTPLKTPA and HFPAMTPRNGGGGGAAAGGT. A Kinesin motor domain is found at 56-391; the sequence is PVEVIGRIRN…LEYGAKAKCI (336 aa). Residue 137–144 coordinates ATP; the sequence is GPTGSGKS. The stretch at 426-517 forms a coiled coil; that stretch reads NLQKENKLRE…QRLKEVEREK (92 aa). Residues 676–718 form a disordered region; that stretch reads PAKKAFGDENNEPAKQTFGDENKQQPAKRVFGDENKDPSAWGA.

Belongs to the TRAFAC class myosin-kinesin ATPase superfamily. Kinesin family. KIN-10 subfamily.

The polypeptide is Kinesin-like protein KIN-10A (Oryza sativa subsp. japonica (Rice)).